Here is a 472-residue protein sequence, read N- to C-terminus: Adenosylhomocysteinase (472 aa).

3 residues coordinate substrate: Thr61, Asp136, and Glu196. 197–199 (TTT) serves as a coordination point for NAD(+). Substrate is bound by residues Lys226 and Asp230. Residues Asn231, 260 to 265 (GYGDVG), Glu283, Asn318, 339 to 341 (IGH), and Asn384 each bind NAD(+).

Belongs to the adenosylhomocysteinase family. Requires NAD(+) as cofactor.

It is found in the cytoplasm. The catalysed reaction is S-adenosyl-L-homocysteine + H2O = L-homocysteine + adenosine. It participates in amino-acid biosynthesis; L-homocysteine biosynthesis; L-homocysteine from S-adenosyl-L-homocysteine: step 1/1. In terms of biological role, may play a key role in the regulation of the intracellular concentration of adenosylhomocysteine. This is Adenosylhomocysteinase from Cupriavidus pinatubonensis (strain JMP 134 / LMG 1197) (Cupriavidus necator (strain JMP 134)).